The following is a 154-amino-acid chain: Transmembrane protein 35B (154 aa).

The signal sequence occupies residues 1–22 (MALLLSVLRVLLGGFFALVGLA). 3 helical membrane passes run 63–83 (IAVG…PPML), 85–105 (EISN…LAAL), and 112–132 (CIPA…QLLA).

The protein belongs to the DoxX family.

It is found in the membrane. This is Transmembrane protein 35B from Homo sapiens (Human).